A 37-amino-acid polypeptide reads, in one-letter code: Cytochrome b6-f complex subunit 5 (37 aa).

Residues 5 to 25 form a helical membrane-spanning segment; that stretch reads FLFGIVLGLIPITLAGLFVTA.

Belongs to the PetG family. As to quaternary structure, the 4 large subunits of the cytochrome b6-f complex are cytochrome b6, subunit IV (17 kDa polypeptide, PetD), cytochrome f and the Rieske protein, while the 4 small subunits are PetG, PetL, PetM and PetN. The complex functions as a dimer.

It localises to the plastid. Its subcellular location is the chloroplast thylakoid membrane. Functionally, component of the cytochrome b6-f complex, which mediates electron transfer between photosystem II (PSII) and photosystem I (PSI), cyclic electron flow around PSI, and state transitions. PetG is required for either the stability or assembly of the cytochrome b6-f complex. This Platanus occidentalis (Sycamore) protein is Cytochrome b6-f complex subunit 5.